Here is a 430-residue protein sequence, read N- to C-terminus: Probable carboxypeptidase AO090003000058 (430 aa).

A signal peptide spans 1–16; that stretch reads MKSIYSLVLCTALTAA. Asparagine 84 carries N-linked (GlcNAc...) asparagine glycosylation. Residue aspartate 156 coordinates Zn(2+). The Proton acceptor role is filled by glutamate 188. Glutamate 189 lines the Zn(2+) pocket. A glycan (N-linked (GlcNAc...) asparagine) is linked at asparagine 285.

The protein belongs to the peptidase M20A family. The cofactor is Zn(2+).

It localises to the secreted. The protein is Probable carboxypeptidase AO090003000058 of Aspergillus oryzae (strain ATCC 42149 / RIB 40) (Yellow koji mold).